The following is a 78-amino-acid chain: NEDD8-like protein RUB3 (78 aa).

A Glycyl lysine isopeptide (Gly-Lys) (interchain with K-? in acceptor proteins) cross-link involves residue Gly76. Positions 77-78 (CC) are excised as a propeptide.

In terms of tissue distribution, detected in stems and flower buds, but not in leaves, mature flowers and seedlings.

May function as a stable post-translational protein modifier. In Arabidopsis thaliana (Mouse-ear cress), this protein is NEDD8-like protein RUB3 (RUB3).